The chain runs to 193 residues: dCTP deaminase (193 aa).

DCTP is bound by residues 110–115, aspartate 128, 136–138, tyrosine 171, lysine 178, and glutamine 182; these read RSSLAR and VLE. Glutamate 138 (proton donor/acceptor) is an active-site residue. The segment at 174 to 193 is disordered; that stretch reads RKNAKYKDQQEAVASRISQD.

It belongs to the dCTP deaminase family. As to quaternary structure, homotrimer.

It carries out the reaction dCTP + H2O + H(+) = dUTP + NH4(+). The protein operates within pyrimidine metabolism; dUMP biosynthesis; dUMP from dCTP (dUTP route): step 1/2. Catalyzes the deamination of dCTP to dUTP. This Shewanella sp. (strain W3-18-1) protein is dCTP deaminase.